The sequence spans 1433 residues: MSMLKPSGLKAPSKTIKHGSTLLKAPASVATAPAEKAPSSEKSSSTTTADAHDDFVDDFRVGERVWVNGNKPGFIQFLGETQFAPGQWAGIVLDEPIGKNDGSVAGVRYFQCEPLRGIFTRPSKLSRKVLTEDEANGTQTAHASRATSPTSTSTASAVSASPAALLPSGIPQKTSPLAAKEHSTPSQFSNLSKTASGSVSNLSEAGSLKKGERELKIGDRVLVGGTKAGVVRFLGETDFAKGEWCGVELDEPLGKNDGAVAGTRYFQCQPRYGLFAPVHKVTKIGFPSTTPAKAKTTVRKVVATPAALKRSPSASSLSSLSSVASSVSSKPSRTGLLTETSSRYARKISGTTALQEALKEKQQHIEQLLAERDLERAEVAKATSHVGEIEQELALVRDGHDRHVLEMEAKMDQLRAMVEAADREKVELLNQLEEEKRKVEDLQFRVEEESITKGDLETQTKLEHARIKELEQSLLFEKTKADKLQRELEDTRVATVSEKSRIMELERDLALRVKEVAELRGRLESSKHIDDVDTSLSLLQEISSLQEKMAAAGKEHQREMSSLKEKFESSEEALRKEIKTLSASNERMGKENESLKTKLDHANKENSDVIELWKSKLESAIASHQQAMEELKVSFNKGVGAQTAEFAELKTQMEKVKLDYENEMSNLKLKQENEKSQHLKEIEALKAKLLEVTEEKEQTLENLKAKLESVEDQHLVEMEDTLNKLQEAEIKVKELDVLQAKCNEQTKLIGSLTQQIRASEEKLLDLAALQKANSEGKLEIQKLSEQLQAAEKQIQNLETEKVSNLTKELQGKEQKLLDLEKNLSAVNQVKDSLEKELQLLKEKFTSAVDGAENAQRAMQETINKLNQKEEQFALMSSELEQLKSNLTVMETKLKEREEREQQLTEAKVKLENDIAEIMKSSGDSSAQLMKMNDELRLKERQLEQIQLELTKANEKAVQLQKNVEQTAQKAEQSQQETLKTHQEELKKMQDQLTDMKKQMETSQNQYKDLQAKYEKETSEMITKHDADIKGFKQNLLDAEEALKAAQKKNDELETQAEELKKQAEQAKADKRAEEVLQTMEKVTKEKDAIHQEKIETLASLENSRQTNEKLQNELDMLKQNNLKNEEELTKSKELLNLENKKVEELKKEFEALKLAAAQKSQQLAALQEENVKLAEELGRSRDEVTSHQKLEEERSVLNNQLLEMKKRESTLKKEIDEERASLQKSISDTSALITQKDEELEKLRNEITVLRGENASAKTLQSVVKTLESDKLKLEEKVKNLEQKLKAKSEQPLTVTSPSGDIAANLLQDESAEDKQQEIDFLNSVIVDLQRRNEELNLKIQRMCEAALNGNEEETINYDSEEEGLSKKTPRLFCDICGCFDLHDTEDCPTQAQMLEEPPHSTYHGSRREERPYCDTCEMFGHWTADCNDDETF.

A disordered region spans residues 1 to 51 (MSMLKPSGLKAPSKTIKHGSTLLKAPASVATAPAEKAPSSEKSSSTTTADA). The segment covering 32–49 (APAEKAPSSEKSSSTTTA) has biased composition (low complexity). The region spanning 79-121 (GETQFAPGQWAGIVLDEPIGKNDGSVAGVRYFQCEPLRGIFTR) is the CAP-Gly 1 domain. A disordered region spans residues 133–208 (DEANGTQTAH…VSNLSEAGSL (76 aa)). Residues 140–168 (TAHASRATSPTSTSTASAVSASPAALLPS) show a composition bias toward low complexity. Over residues 184-204 (TPSQFSNLSKTASGSVSNLSE) the composition is skewed to polar residues. The region spanning 235–277 (GETDFAKGEWCGVELDEPLGKNDGAVAGTRYFQCQPRYGLFAP) is the CAP-Gly 2 domain. The segment covering 319–333 (SLSSVASSVSSKPSR) has biased composition (low complexity). A disordered region spans residues 319–338 (SLSSVASSVSSKPSRTGLLT). Residues 351 to 1353 (TTALQEALKE…CEAALNGNEE (1003 aa)) adopt a coiled-coil conformation. Residues 1412–1429 (PYCDTCEMFGHWTADCND) form a CCHC-type zinc finger.

The protein resides in the cytoplasm. It localises to the cytoskeleton. It is found in the cytoplasmic vesicle membrane. Its subcellular location is the cell projection. The protein localises to the ruffle. In terms of biological role, binds to the plus end of microtubules and regulates the dynamics of the microtubule cytoskeleton. Promotes microtubule growth and microtubule bundling. Links cytoplasmic vesicles to microtubules and thereby plays an important role in intracellular vesicle trafficking. Plays a role macropinocytosis and endosome trafficking. The protein is CAP-Gly domain-containing linker protein 1 (CLIP1) of Gallus gallus (Chicken).